Reading from the N-terminus, the 248-residue chain is MARKYFVAANWKCNGTLESIKSLTNSFNNLDFDPSKLDVVVFPVSVHYDHTRKLLQSKFSTGIQNVSKFGNGSYTGEVSAEIAKDLNIEYVIIGHFERRKYFHETDEDVREKLQASLKNNLKAVVCFGESLEQREQNKTIEVITKQVKAFVDLIDNFDNVILAYEPLWAIGTGKTATPEQAQLVHKEIRKIVKDTCGEKQANQIRILYGGSVNTENCSSLIQQEDIDGFLVGNASLKESFVDIIKSAM.

D-glyceraldehyde 3-phosphate is bound by residues Asn-10 and Lys-12. Residue His-95 is the Electrophile of the active site. Catalysis depends on Glu-165, which acts as the Proton acceptor. D-glyceraldehyde 3-phosphate contacts are provided by residues Gly-171, Leu-230, and 232-233 (GN).

This sequence belongs to the triosephosphate isomerase family. In terms of assembly, homodimer.

It catalyses the reaction D-glyceraldehyde 3-phosphate = dihydroxyacetone phosphate. It participates in carbohydrate biosynthesis; gluconeogenesis. The protein operates within carbohydrate degradation; glycolysis; D-glyceraldehyde 3-phosphate from glycerone phosphate: step 1/1. Its function is as follows. Catalyzes the interconversion of glyceraldehyde 3-phosphate and dihydroxyacetone phosphate in the glycolytic and gluconeogenic pathways. The polypeptide is Triosephosphate isomerase (Plasmodium falciparum (isolate 3D7)).